The chain runs to 361 residues: UDP-3-O-acylglucosamine N-acyltransferase (361 aa).

Residue H253 is the Proton acceptor of the active site.

This sequence belongs to the transferase hexapeptide repeat family. LpxD subfamily. In terms of assembly, homotrimer.

The enzyme catalyses a UDP-3-O-[(3R)-3-hydroxyacyl]-alpha-D-glucosamine + a (3R)-hydroxyacyl-[ACP] = a UDP-2-N,3-O-bis[(3R)-3-hydroxyacyl]-alpha-D-glucosamine + holo-[ACP] + H(+). It functions in the pathway bacterial outer membrane biogenesis; LPS lipid A biosynthesis. Its function is as follows. Catalyzes the N-acylation of UDP-3-O-acylglucosamine using 3-hydroxyacyl-ACP as the acyl donor. Is involved in the biosynthesis of lipid A, a phosphorylated glycolipid that anchors the lipopolysaccharide to the outer membrane of the cell. The chain is UDP-3-O-acylglucosamine N-acyltransferase from Burkholderia pseudomallei (strain 668).